We begin with the raw amino-acid sequence, 662 residues long: DNA topoisomerase 4 subunit B (662 aa).

Residues Tyr20, Asn60, Asp87, 129-135 (GLHGVGV), and Lys359 contribute to the ATP site. One can recognise a Toprim domain in the interval 439–553 (TELFIVEGDS…DGHLYLAKPP (115 aa)). Residues Glu445, Asp518, and Asp520 each contribute to the Mg(2+) site.

The protein belongs to the type II topoisomerase family. ParE type 1 subfamily. As to quaternary structure, heterotetramer composed of ParC and ParE. Requires Mg(2+) as cofactor. It depends on Mn(2+) as a cofactor. Ca(2+) is required as a cofactor.

The enzyme catalyses ATP-dependent breakage, passage and rejoining of double-stranded DNA.. Functionally, topoisomerase IV is essential for chromosome segregation. It relaxes supercoiled DNA. Performs the decatenation events required during the replication of a circular DNA molecule. This Rickettsia bellii (strain RML369-C) protein is DNA topoisomerase 4 subunit B.